Reading from the N-terminus, the 401-residue chain is Probable trafficking protein particle complex subunit 13 homolog (401 aa).

Belongs to the TRAPPC13 family.

The protein is Probable trafficking protein particle complex subunit 13 homolog of Caenorhabditis elegans.